The chain runs to 72 residues: MSKDDVIEMQGTVLEALPNAMFQIQLESGQTILGHVSGKLRMNFIRILPGDKVTVELSPYDLSRGRITWRAK.

Residues 1–72 (MSKDDVIEMQ…SRGRITWRAK (72 aa)) form the S1-like domain.

This sequence belongs to the IF-1 family. Component of the 30S ribosomal translation pre-initiation complex which assembles on the 30S ribosome in the order IF-2 and IF-3, IF-1 and N-formylmethionyl-tRNA(fMet); mRNA recruitment can occur at any time during PIC assembly.

It is found in the cytoplasm. In terms of biological role, one of the essential components for the initiation of protein synthesis. Stabilizes the binding of IF-2 and IF-3 on the 30S subunit to which N-formylmethionyl-tRNA(fMet) subsequently binds. Helps modulate mRNA selection, yielding the 30S pre-initiation complex (PIC). Upon addition of the 50S ribosomal subunit IF-1, IF-2 and IF-3 are released leaving the mature 70S translation initiation complex. This Clostridium novyi (strain NT) protein is Translation initiation factor IF-1.